Here is a 562-residue protein sequence, read N- to C-terminus: Matrix metalloproteinase-25 (562 aa).

The N-terminal stretch at 1–21 (MRLRLRLLALLLLLLAPPARA) is a signal peptide. Positions 22–107 (PKPSAQDVSL…VAGLVRRRRR (86 aa)) are excised as a propeptide. The short motif at 88 to 95 (PRCSLPDV) is the Cysteine switch element. Cys90 and His233 together coordinate Zn(2+). Glu234 is an active-site residue. Zn(2+) is bound by residues His237 and His243. Residues 278 to 313 (LYGKAPQTPYDKPTRKPLAPPPQPPASPTHSPSFPI) are disordered. Pro residues predominate over residues 295–304 (LAPPPQPPAS). 4 Hemopexin repeats span residues 314 to 363 (PDRC…WEGL), 367 to 412 (VRVV…GLPP), 413 to 461 (GEEV…EGAP), and 462 to 508 (PSPD…WLDC). Cys317 and Cys508 form a disulfide bridge. Positions 490–526 (SIKTEPDAPQPMGPNWLDCPAPSSGPRAPRPPKATPV) are disordered. A lipid anchor (GPI-anchor amidated alanine) is attached at Ala539. The propeptide at 540–562 (AGRWPAPIPLLLLPLLVGGVASR) is removed in mature form.

The protein belongs to the peptidase M10A family. Zn(2+) serves as cofactor. The cofactor is Ca(2+). Post-translationally, the precursor is cleaved by a furin endopeptidase. Expressed predominantly in leukocytes, lung and spleen. Expressed also in colon carcinoma, astrocytoma and glioblastomas.

It localises to the cell membrane. It is found in the secreted. The protein resides in the extracellular space. The protein localises to the extracellular matrix. May activate progelatinase A. This is Matrix metalloproteinase-25 (MMP25) from Homo sapiens (Human).